The sequence spans 404 residues: Iron-sulfur assembly protein IscA2 (404 aa).

Residues 244-289 are a coiled coil; sequence KEEDEKKLDKLLKKRNIKKRDIVTITEEAKEELKKIISINKKENNN.

This sequence belongs to the HesB/IscA family. As to quaternary structure, dimer. Homotetramer. Interacts with ABCB6.

Its subcellular location is the mitochondrion. It functions in the pathway cofactor biosynthesis; iron-sulfur cluster biosynthesis. Participates in iron-sulfur cluster formation (ISC) pathway for iron-sulfur (Fe-S) cluster biogenesis. Can bind and transfer [4Fe-4S] clusters to target apo-proteins. The protein is Iron-sulfur assembly protein IscA2 of Plasmodium falciparum (isolate 3D7).